Consider the following 241-residue polypeptide: Probable transcriptional regulatory protein Daro_4067 (241 aa).

The disordered stretch occupies residues 1 to 22 (MAGHSKWANIQHRKGRQDEKRG).

The protein belongs to the TACO1 family.

Its subcellular location is the cytoplasm. The polypeptide is Probable transcriptional regulatory protein Daro_4067 (Dechloromonas aromatica (strain RCB)).